We begin with the raw amino-acid sequence, 339 residues long: tRNA dimethylallyltransferase (339 aa).

36–43 contributes to the ATP binding site; sequence GPTGSGKT. Residue 38 to 43 coordinates substrate; the sequence is TGSGKT. The interaction with substrate tRNA stretch occupies residues 61 to 64; it reads DSMQ.

The protein belongs to the IPP transferase family. In terms of assembly, monomer. It depends on Mg(2+) as a cofactor.

The catalysed reaction is adenosine(37) in tRNA + dimethylallyl diphosphate = N(6)-dimethylallyladenosine(37) in tRNA + diphosphate. Its function is as follows. Catalyzes the transfer of a dimethylallyl group onto the adenine at position 37 in tRNAs that read codons beginning with uridine, leading to the formation of N6-(dimethylallyl)adenosine (i(6)A). The chain is tRNA dimethylallyltransferase from Chlamydia trachomatis serovar L2 (strain ATCC VR-902B / DSM 19102 / 434/Bu).